The chain runs to 491 residues: LETM1 domain-containing protein LETM2, mitochondrial (491 aa).

Residues M1–T25 constitute a mitochondrion transit peptide. Over C26 to R177 the chain is Mitochondrial intermembrane. The span at E94–K109 shows a compositional bias: polar residues. Positions E94 to I115 are disordered. A helical transmembrane segment spans residues L178–L198. The Mitochondrial matrix portion of the chain corresponds to K199 to A491. Positions T208 to E235 form a coiled coil. The 218-residue stretch at K221–D438 folds into the Letm1 RBD domain. A disordered region spans residues G435–A491. Residues S449–P461 show a composition bias toward low complexity. A compositionally biased stretch (polar residues) spans I465–A491.

Its subcellular location is the mitochondrion inner membrane. The protein is LETM1 domain-containing protein LETM2, mitochondrial (LETM2) of Homo sapiens (Human).